Reading from the N-terminus, the 274-residue chain is Transcription factor Ovo-like 2 (274 aa).

Over residues Met1–Ser11 the composition is skewed to basic residues. The disordered stretch occupies residues Met1–Gly88. A compositionally biased stretch (basic and acidic residues) spans Ser18–Asp29. A compositionally biased stretch (low complexity) spans Asp50–Arg74. 4 C2H2-type zinc fingers span residues His118–His140, His146–His168, Tyr174–His197, and Tyr213–His236. At Ser268 the chain carries Phosphoserine.

It belongs to the krueppel C2H2-type zinc-finger protein family. In terms of assembly, interacts (via zinc-finger domains) with CEBPA (via bZIP domain); the interaction inhibits the transcription factor activity of CEBPA and is required to repress adipogenesis. Expressed highly in testis, specifically in spermatocytes. Expressed also in skin and at lower levels in the ovary. Expressed in adipose tissues. Expression is lower than in testis and a relatively higher expression level is detected in the stromal vascular fraction (SVF) than in fat cells themselves.

Its subcellular location is the nucleus. Zinc-finger transcription repressor factor. Plays a critical role in maintaining the identity of epithelial lineages by suppressing epithelial-to mesenchymal transition (EMT) mainly through the repression of ZEB1, an EMT inducer. Positively regulates neuronal differentiation. Suppresses cell cycling and terminal differentiation of keratinocytes by directly repressing MYC and NOTCH1. Important for the correct development of primordial germ cells in embryos. Plays dual functions in thermogenesis and adipogenesis to maintain energy balance. Essential for brown/beige adipose tissue-mediated thermogenesis, is necessary for the development of brown adipocytes. In white adipose tissues, limits adipogenesis by blocking CEBPA binding to its transcriptional targets and inhibiting its transcription factor activity. The chain is Transcription factor Ovo-like 2 from Mus musculus (Mouse).